The chain runs to 319 residues: tRNA-cytidine(32) 2-sulfurtransferase (319 aa).

The short motif at 43–48 (SGGKDS) is the PP-loop motif element. The [4Fe-4S] cluster site is built by cysteine 118, cysteine 121, and cysteine 209.

It belongs to the TtcA family. In terms of assembly, homodimer. Mg(2+) serves as cofactor. Requires [4Fe-4S] cluster as cofactor.

It is found in the cytoplasm. The enzyme catalyses cytidine(32) in tRNA + S-sulfanyl-L-cysteinyl-[cysteine desulfurase] + AH2 + ATP = 2-thiocytidine(32) in tRNA + L-cysteinyl-[cysteine desulfurase] + A + AMP + diphosphate + H(+). The protein operates within tRNA modification. In terms of biological role, catalyzes the ATP-dependent 2-thiolation of cytidine in position 32 of tRNA, to form 2-thiocytidine (s(2)C32). The sulfur atoms are provided by the cysteine/cysteine desulfurase (IscS) system. The sequence is that of tRNA-cytidine(32) 2-sulfurtransferase from Neisseria meningitidis serogroup C (strain 053442).